The chain runs to 214 residues: Large ribosomal subunit protein bL25 (214 aa).

Positions 189–214 are disordered; it reads IHASRKAKADEDEAAEGEEGEEGAED. Residues 198-214 show a composition bias toward acidic residues; the sequence is DEDEAAEGEEGEEGAED.

The protein belongs to the bacterial ribosomal protein bL25 family. CTC subfamily. In terms of assembly, part of the 50S ribosomal subunit; part of the 5S rRNA/L5/L18/L25 subcomplex. Contacts the 5S rRNA. Binds to the 5S rRNA independently of L5 and L18.

Functionally, this is one of the proteins that binds to the 5S RNA in the ribosome where it forms part of the central protuberance. The protein is Large ribosomal subunit protein bL25 of Alkalilimnicola ehrlichii (strain ATCC BAA-1101 / DSM 17681 / MLHE-1).